The following is a 517-amino-acid chain: MHHSFLSANGGVVMSKKTAHGLRLKHLGIKTYHEAIIYMREDCHVCHSEGFEVQTRIQVTLGQHSIIATLNVVTSELLAPGEAGLSDYAWDALHAKEGDEIQVSHPKPLESLSYVHTKIYGNELSYEQMKVIIDDVLSGRLSDVQISAFLAASSAGRLTRTEIMKLTKAMIDSGDRLSWSSPLVVDKHCVGGLPGNRTTLIVVPIVAAFGLMIPKTSSRAITSPAGTADTMETLAPVHLSPQKMRQVVEQENGCIVWGGAVSLSPADDVLIRVERAIDLDSEGQLVASILSKKIATGATHAVIDIPVGPTAKVRNQSMALLLKQSLEEVGNELGLVVHTILTDGSQPVGHGIGPSLEARDVMSVLQGLPDAPNDLRERALTLAGAALECSSKVQPGLGKSIAKQILESGKAFKKFQAICEAQGGMRELTKARFTHPVVAAKEGKVSLIDNRKLAKIAKLAGAPKSKSAGIDLHAHVGESVEQGEPLFTIHSESSGELNYACDLLRDKQDIIILGENS.

It belongs to the thymidine/pyrimidine-nucleoside phosphorylase family. Type 2 subfamily.

The catalysed reaction is thymidine + phosphate = 2-deoxy-alpha-D-ribose 1-phosphate + thymine. The protein is Putative thymidine phosphorylase of Legionella pneumophila (strain Corby).